We begin with the raw amino-acid sequence, 283 residues long: Elongation factor Ts (283 aa).

The tract at residues 80-83 (TDFV) is involved in Mg(2+) ion dislocation from EF-Tu.

It belongs to the EF-Ts family.

The protein resides in the cytoplasm. In terms of biological role, associates with the EF-Tu.GDP complex and induces the exchange of GDP to GTP. It remains bound to the aminoacyl-tRNA.EF-Tu.GTP complex up to the GTP hydrolysis stage on the ribosome. This chain is Elongation factor Ts, found in Salmonella paratyphi A (strain ATCC 9150 / SARB42).